A 236-amino-acid chain; its full sequence is 2,3,4,5-tetrahydropyridine-2,6-dicarboxylate N-acetyltransferase (236 aa).

The protein belongs to the transferase hexapeptide repeat family. DapH subfamily.

It carries out the reaction (S)-2,3,4,5-tetrahydrodipicolinate + acetyl-CoA + H2O = L-2-acetamido-6-oxoheptanedioate + CoA. It participates in amino-acid biosynthesis; L-lysine biosynthesis via DAP pathway; LL-2,6-diaminopimelate from (S)-tetrahydrodipicolinate (acetylase route): step 1/3. Catalyzes the transfer of an acetyl group from acetyl-CoA to tetrahydrodipicolinate. In Clostridium botulinum (strain Alaska E43 / Type E3), this protein is 2,3,4,5-tetrahydropyridine-2,6-dicarboxylate N-acetyltransferase.